Here is a 225-residue protein sequence, read N- to C-terminus: MSPRLRLQPEAVGIGMTSQRVRDRLVDRLREAGIVDESTLNAIRVVPRHLFIDEALASRAYEDTALPIGHGQTISQPWVVARMTEAVLQVSPKKVLEVGTGSGYQAAVLGALGLEIYTVERIGDLLRQARKRFRALGMNIRTKHDDGRAGWAEHGPFDAIVVTAAAPALVDELVGQLAEGGRLVAPVGGPGGQSLVQLDRRADGSIEQRVLAPVTFVPLLSGMLD.

The active site involves Ser75.

Belongs to the methyltransferase superfamily. L-isoaspartyl/D-aspartyl protein methyltransferase family.

It is found in the cytoplasm. The enzyme catalyses [protein]-L-isoaspartate + S-adenosyl-L-methionine = [protein]-L-isoaspartate alpha-methyl ester + S-adenosyl-L-homocysteine. Functionally, catalyzes the methyl esterification of L-isoaspartyl residues in peptides and proteins that result from spontaneous decomposition of normal L-aspartyl and L-asparaginyl residues. It plays a role in the repair and/or degradation of damaged proteins. The polypeptide is Protein-L-isoaspartate O-methyltransferase (Stenotrophomonas maltophilia (strain K279a)).